The following is a 64-amino-acid chain: MAQGGQVSAGGGRRDDDEPIEQTSGAGTQQVNVTGTDDLLDEIDGLLENNAEEFVRSYVQKGGQ.

Positions 1–35 (MAQGGQVSAGGGRRDDDEPIEQTSGAGTQQVNVTG) are disordered. Polar residues predominate over residues 21–33 (EQTSGAGTQQVNV). Residues 21 to 58 (EQTSGAGTQQVNVTGTDDLLDEIDGLLENNAEEFVRSY) are ARC ATPase binding. At Gln-64 the chain carries Deamidated glutamine. An Isoglutamyl lysine isopeptide (Gln-Lys) (interchain with K-? in acceptor proteins) cross-link involves residue Gln-64.

Belongs to the prokaryotic ubiquitin-like protein family. Strongly interacts with the proteasome-associated ATPase ARC through a hydrophobic interface; the interacting region of Pup lies in its C-terminal half. There is one Pup binding site per ARC hexamer ring. Is modified by deamidation of its C-terminal glutamine to glutamate by the deamidase Dop, a prerequisite to the subsequent pupylation process.

Its pathway is protein degradation; proteasomal Pup-dependent pathway. In terms of biological role, protein modifier that is covalently attached to lysine residues of substrate proteins, thereby targeting them for proteasomal degradation. The tagging system is termed pupylation. The polypeptide is Prokaryotic ubiquitin-like protein Pup (Corynebacterium jeikeium (strain K411)).